Consider the following 196-residue polypeptide: uncharacterized protein (196 aa).

Positions 122–135 (SEIEKKQEPIERKT) are enriched in basic and acidic residues. Residues 122–150 (SEIEKKQEPIERKTSTTTNTESNQEKPLR) are disordered.

This is an uncharacterized protein from Leptospira interrogans.